We begin with the raw amino-acid sequence, 124 residues long: Small ribosomal subunit protein uS11 (124 aa).

The tract at residues 102-124 is disordered; the sequence is RIGRIEDATPIPHDGTTPKRKNR.

The protein belongs to the universal ribosomal protein uS11 family. In terms of assembly, part of the 30S ribosomal subunit.

In terms of biological role, located on the platform of the 30S subunit. The protein is Small ribosomal subunit protein uS11 of Methanococcus maripaludis (strain C5 / ATCC BAA-1333).